The primary structure comprises 164 residues: Interferon gamma (164 aa).

The signal sequence occupies residues 1 to 19 (MTCQTYNLFVLSVIMIYYG). N-linked (GlcNAc...) asparagine glycosylation is found at N42 and N61.

The protein belongs to the type II (or gamma) interferon family. In terms of assembly, homodimer.

It is found in the secreted. In terms of biological role, produced by lymphocytes activated by specific antigens or mitogens. IFN-gamma, in addition to having antiviral activity, has important immunoregulatory functions. It is a potent activator of macrophages, it has antiproliferative effects on transformed cells and it can potentiate the antiviral and antitumor effects of the type I interferons. The sequence is that of Interferon gamma (IFNG) from Meleagris gallopavo (Wild turkey).